We begin with the raw amino-acid sequence, 275 residues long: 2,3,4,5-tetrahydropyridine-2,6-dicarboxylate N-succinyltransferase (275 aa).

The protein belongs to the transferase hexapeptide repeat family.

Its subcellular location is the cytoplasm. The enzyme catalyses (S)-2,3,4,5-tetrahydrodipicolinate + succinyl-CoA + H2O = (S)-2-succinylamino-6-oxoheptanedioate + CoA. The protein operates within amino-acid biosynthesis; L-lysine biosynthesis via DAP pathway; LL-2,6-diaminopimelate from (S)-tetrahydrodipicolinate (succinylase route): step 1/3. The sequence is that of 2,3,4,5-tetrahydropyridine-2,6-dicarboxylate N-succinyltransferase from Burkholderia multivorans (strain ATCC 17616 / 249).